A 172-amino-acid chain; its full sequence is Translation initiation factor IF-3 (172 aa).

This sequence belongs to the IF-3 family. In terms of assembly, monomer.

Its subcellular location is the cytoplasm. IF-3 binds to the 30S ribosomal subunit and shifts the equilibrium between 70S ribosomes and their 50S and 30S subunits in favor of the free subunits, thus enhancing the availability of 30S subunits on which protein synthesis initiation begins. This Sulfurimonas denitrificans (strain ATCC 33889 / DSM 1251) (Thiomicrospira denitrificans (strain ATCC 33889 / DSM 1251)) protein is Translation initiation factor IF-3.